We begin with the raw amino-acid sequence, 341 residues long: MSAYIAPSQIAQRQLEYFNGKHVLVAGEVEDMFPLELTAHCESVEVFTSNYSYFRQIRHSDKIKSHFGSEFDVETQADMLLLYWPKAKAEAEYLLAMLMAKLGVNTEIVVVGENRSGVKSIEKMFKEYGPVNKYDSARRCSFYWGNCLNEPKPFNQEEWFKSYTVTLGEQSLTVKSLPGVFSHGEFDLGSRLLLETLPNLSGKVLDFGCGAGVLGAFMAKANPEIAIEMCDINAYAITSSQATLEANGLSGRVFASDIYSDTANDYRFIISNPPFHSGLDTNYNAAETLLGHAPQHLSNHGEMIIVANSFLKYPPIIENAFNNCETLNKTNKFSIYYAKKS.

Belongs to the methyltransferase superfamily. RsmC family. As to quaternary structure, monomer.

The protein localises to the cytoplasm. It carries out the reaction guanosine(1207) in 16S rRNA + S-adenosyl-L-methionine = N(2)-methylguanosine(1207) in 16S rRNA + S-adenosyl-L-homocysteine + H(+). Functionally, specifically methylates the guanine in position 1207 of 16S rRNA in the 30S particle. The chain is Ribosomal RNA small subunit methyltransferase C from Vibrio parahaemolyticus serotype O3:K6 (strain RIMD 2210633).